The following is a 594-amino-acid chain: Chondroitin sulfate proteoglycan 5 (594 aa).

Residues 1–12 (MGVGGTSASDTA) show a composition bias toward polar residues. The first 18 residues, 1-18 (MGVGGTSASDTALSLCPT), serve as a signal peptide directing secretion. Disordered stretches follow at residues 1-325 (MGVG…PWGL) and 343-418 (TTSF…SECR). Residues 19–481 (APEWPPRNGS…AIVTDFQVLC (463 aa)) are Extracellular-facing. Asn26 and Asn44 each carry an N-linked (GlcNAc...) asparagine glycan. Residues 140 to 181 (SPGLGLSSPGPNLGLPSLDLPNPNLGLPDPNLGLPNPSLGLP) are compositionally biased toward low complexity. Pro residues-rich tracts occupy residues 182–195 (SPGP…PNPN) and 219–229 (IPLPSPSPGPG). The segment covering 248-259 (PQPSSSPAPAQR) has biased composition (low complexity). Residues 298–310 (GGHGPGGGHGAGG) are compositionally biased toward gly residues. Residues 338-377 (ADFYPTTSFYAEGDDDAEEELEEDEEEEEEEDGGLEDENG) are interaction with TNC and TNR. A compositionally biased stretch (acidic residues) spans 349 to 375 (EGDDDAEEELEEDEEEEEEEDGGLEDE). 2 N-linked (GlcNAc...) asparagine glycosylation sites follow: Asn413 and Asn425. Positions 429 to 471 (RSVCDLVPSYCHNGGQCYLVESHGAFCRCNTQDYTWHKGTRCE) constitute an EGF-like domain. 3 cysteine pairs are disulfide-bonded: Cys432-Cys445, Cys439-Cys455, and Cys457-Cys470. The chain crosses the membrane as a helical span at residues 482-502 (VAVGSAALVLLLLFMLTVFFA). Topologically, residues 503 to 594 (KKLYLLKTEN…GVPCLHNNLG (92 aa)) are cytoplasmic. A disordered region spans residues 535–594 (TIAEGSHPNDDPGAPHKLQDPLKPGLKDEEPLSILSTAPEEGSKGEPGGCGVPCLHNNLG). The span at 541 to 564 (HPNDDPGAPHKLQDPLKPGLKDEE) shows a compositional bias: basic and acidic residues.

Binds TNC and TNR. The 80 kDa form but not the 140 kDa form can bind TNC and TNR when expressed at the cell surface. In terms of processing, different forms exist: the 140 kDa form (also reported as 130 kDa), which probably consists of the entire protein, and the 38 and 80 kDa forms, which are probably cleaved in their N-terminus. Increase in synaptic activity, results in shedding of the extracellular domain and expression at the cell surface of a 38 kDa form. A form of 200 kDa has also been reported, which is probably hyperglycosylated. N-glycosylated. Post-translationally, O-glycosylated; contains chondroitin sulfate glycans. Part-time proteoglycan, the 200 kDa form is the only one containing chondroitin sulfate glycans. As to expression, expressed in astroglial and neuronal surfaces in different parts of the embryonic brain. Expressed in adult brain and retina (at protein level).

It is found in the cell membrane. In terms of biological role, may function as a growth and differentiation factor involved in neuritogenesis and more particularly in neurite extension. This is Chondroitin sulfate proteoglycan 5 (CSPG5) from Gallus gallus (Chicken).